A 439-amino-acid polypeptide reads, in one-letter code: Proline--tRNA ligase (439 aa).

This sequence belongs to the class-II aminoacyl-tRNA synthetase family. ProS type 2 subfamily. As to quaternary structure, homodimer.

The protein localises to the cytoplasm. It catalyses the reaction tRNA(Pro) + L-proline + ATP = L-prolyl-tRNA(Pro) + AMP + diphosphate. Catalyzes the attachment of proline to tRNA(Pro) in a two-step reaction: proline is first activated by ATP to form Pro-AMP and then transferred to the acceptor end of tRNA(Pro). The sequence is that of Proline--tRNA ligase from Phenylobacterium zucineum (strain HLK1).